Here is a 429-residue protein sequence, read N- to C-terminus: SH2 domain-containing protein 5 (429 aa).

Residues 302 to 398 form the SH2 domain; the sequence is WAFAGLSRSC…LSMGRLNPTY (97 aa).

As to quaternary structure, interacts with BCR. As to expression, highly expressed in brain, particularly in Purkinjie cells in the cerebellum and the cornu ammonis of the hippocampus.

Its subcellular location is the postsynaptic density. Its function is as follows. May be involved in synaptic plasticity regulation through the control of Rac-GTP levels. This Mus musculus (Mouse) protein is SH2 domain-containing protein 5.